The chain runs to 664 residues: Sorbicillinoid biosynthetic cluster transcription factor sor3 (664 aa).

A DNA-binding region (zn(2)-C6 fungal-type) is located at residues 40-67; that stretch reads CQSCRASKVKCDGGRPVCARCQKRGRAC. The segment at 68 to 102 is disordered; sequence SYSQHDAASPRGRGRQRAKAPTRQPRPIRSRASVE.

The protein localises to the nucleus. Transcription factor that acts in concert with sor4 which is a transcriptional activator of the gene cluster that mediates the biosynthesis of sorbicillinoids, a diverse group of yellow secondary metabolites that restrict growth of competing pathogenic fungi but not of bacteria. Regulates the cluster genes in a light dependent manner. Also plays a direct or indirect role in regulation of paracelsin biosynthesis and cellulase gene expression. In Hypocrea jecorina (strain QM6a) (Trichoderma reesei), this protein is Sorbicillinoid biosynthetic cluster transcription factor sor3.